A 161-amino-acid chain; its full sequence is Nucleotide-binding protein Aave_1854 (161 aa).

The protein belongs to the YajQ family.

Functionally, nucleotide-binding protein. This Paracidovorax citrulli (strain AAC00-1) (Acidovorax citrulli) protein is Nucleotide-binding protein Aave_1854.